An 87-amino-acid polypeptide reads, in one-letter code: Mitochondrial import inner membrane translocase subunit TIM9 (87 aa).

The short motif at Cys35–Cys59 is the Twin CX3C motif element. Disulfide bonds link Cys35-Cys59 and Cys39-Cys55.

The protein belongs to the small Tim family. As to quaternary structure, heterohexamer; composed of 3 copies of TIM9 and 3 copies of TIM10, named soluble 70 kDa complex. Associates with the TIM22 complex, whose core is composed of TIM22 and TIM54. Interacts with the transmembrane regions of multi-pass transmembrane proteins in transit.

It localises to the mitochondrion inner membrane. Mitochondrial intermembrane chaperone that participates in the import and insertion of multi-pass transmembrane proteins into the mitochondrial inner membrane. Also required for the transfer of beta-barrel precursors from the TOM complex to the sorting and assembly machinery (SAM complex) of the outer membrane. Acts as a chaperone-like protein that protects the hydrophobic precursors from aggregation and guide them through the mitochondrial intermembrane space. The chain is Mitochondrial import inner membrane translocase subunit TIM9 (TIM9) from Kluyveromyces lactis (strain ATCC 8585 / CBS 2359 / DSM 70799 / NBRC 1267 / NRRL Y-1140 / WM37) (Yeast).